A 353-amino-acid polypeptide reads, in one-letter code: Survival factor 2 (353 aa).

It belongs to the SVF1 family.

Its subcellular location is the cytoplasm. It is found in the nucleus. This chain is Survival factor 2 (svf2), found in Schizosaccharomyces pombe (strain 972 / ATCC 24843) (Fission yeast).